The following is an 88-amino-acid chain: Toxin RelE3 (88 aa).

It belongs to the RelE toxin family. In terms of assembly, forms heterodimers with RelB3 and possibly a heterotetramer RelE3-RelB3(2)-RelE3 from 2 heterodimers. The heterotetramer is probably not very stable in solution.

Its function is as follows. Toxic component of a type II toxin-antitoxin (TA) system. Has RNase activity. Is very toxic upon expression in E.coli. Its toxic activity is probably neutralized by the cognate antitoxin RelB3. In Methanocaldococcus jannaschii (strain ATCC 43067 / DSM 2661 / JAL-1 / JCM 10045 / NBRC 100440) (Methanococcus jannaschii), this protein is Toxin RelE3 (relE3).